Here is an 88-residue protein sequence, read N- to C-terminus: MAASPAPAVDPSSVAADQLKSIIERIERLEEEKAGIAGDIKDVYAEAKANGFDVKVLRKIISLRKRDHDERQEEEAILELYLQALGMA.

It belongs to the UPF0335 family.

The sequence is that of UPF0335 protein MexAM1_META1p2947 from Methylorubrum extorquens (strain ATCC 14718 / DSM 1338 / JCM 2805 / NCIMB 9133 / AM1) (Methylobacterium extorquens).